The chain runs to 477 residues: Bifunctional protein HldE (477 aa).

The segment at 1 to 318 (MKVTLPEFER…ENAVRGRADT (318 aa)) is ribokinase. N6-acetyllysine is present on Lys-179. 195 to 198 (NLSE) is a binding site for ATP. Asp-264 is an active-site residue. The interval 344–477 (MTNGVFDILH…IKKIQQDKKG (134 aa)) is cytidylyltransferase.

In the N-terminal section; belongs to the carbohydrate kinase PfkB family. This sequence in the C-terminal section; belongs to the cytidylyltransferase family. Homodimer.

It carries out the reaction D-glycero-beta-D-manno-heptose 7-phosphate + ATP = D-glycero-beta-D-manno-heptose 1,7-bisphosphate + ADP + H(+). The catalysed reaction is D-glycero-beta-D-manno-heptose 1-phosphate + ATP + H(+) = ADP-D-glycero-beta-D-manno-heptose + diphosphate. It functions in the pathway nucleotide-sugar biosynthesis; ADP-L-glycero-beta-D-manno-heptose biosynthesis; ADP-L-glycero-beta-D-manno-heptose from D-glycero-beta-D-manno-heptose 7-phosphate: step 1/4. Its pathway is nucleotide-sugar biosynthesis; ADP-L-glycero-beta-D-manno-heptose biosynthesis; ADP-L-glycero-beta-D-manno-heptose from D-glycero-beta-D-manno-heptose 7-phosphate: step 3/4. Catalyzes the phosphorylation of D-glycero-D-manno-heptose 7-phosphate at the C-1 position to selectively form D-glycero-beta-D-manno-heptose-1,7-bisphosphate. Its function is as follows. Catalyzes the ADP transfer from ATP to D-glycero-beta-D-manno-heptose 1-phosphate, yielding ADP-D-glycero-beta-D-manno-heptose. This Escherichia coli (strain 55989 / EAEC) protein is Bifunctional protein HldE.